A 507-amino-acid chain; its full sequence is Zinc finger CCCH-type with G patch domain-containing protein (507 aa).

Residue methionine 1 is modified to N-acetylmethionine. Residues 88–125 (PVDPGNDSKTVPGSEVQPTPTSSALEEEEEDPDLEDLS) are disordered. A compositionally biased stretch (polar residues) spans 94–111 (DSKTVPGSEVQPTPTSSA). The span at 112–123 (LEEEEEDPDLED) shows a compositional bias: acidic residues. A C3H1-type zinc finger spans residues 170 to 196 (KSLKPCPFFLEGKCRFKENCRFSHGQL). The tract at residues 264–283 (LRTEATDSSDSDTGDASDSS) is disordered. Residue serine 272 is modified to Phosphoserine. At threonine 276 the chain carries Phosphothreonine. One can recognise a G-patch domain in the interval 309–355 (TRGIGSKLLVKMGYEFGKGLGRHAEGRVEPIHAVVLPRGKSLDQCAE). Serine 349 bears the Phosphoserine mark. Disordered stretches follow at residues 359–389 (KKTKQGQTGASRPPRCRRRSSRPEGRPPPRN) and 486–507 (AQEADLQRKQRKADTHRKMTEF). Basic and acidic residues predominate over residues 487-507 (QEADLQRKQRKADTHRKMTEF).

As to quaternary structure, interacts with CHD4/Mi-2; the interaction is direct.

The protein resides in the nucleus. Transcription repressor that specifically binds the 5'-GGAG[GA]A[GA]A-3' consensus sequence. Represses transcription by recruiting the chromatin multiprotein complex NuRD to target promoters. Negatively regulates expression of EGFR, a gene involved in cell proliferation, survival and migration. Its ability to repress genes of the EGFR pathway suggest it may act as a tumor suppressor. In Rattus norvegicus (Rat), this protein is Zinc finger CCCH-type with G patch domain-containing protein (Zgpat).